The primary structure comprises 869 residues: Alanine--tRNA ligase (869 aa).

4 residues coordinate Zn(2+): histidine 559, histidine 563, cysteine 660, and histidine 664.

Belongs to the class-II aminoacyl-tRNA synthetase family. Zn(2+) serves as cofactor.

It localises to the cytoplasm. It carries out the reaction tRNA(Ala) + L-alanine + ATP = L-alanyl-tRNA(Ala) + AMP + diphosphate. Catalyzes the attachment of alanine to tRNA(Ala) in a two-step reaction: alanine is first activated by ATP to form Ala-AMP and then transferred to the acceptor end of tRNA(Ala). Also edits incorrectly charged Ser-tRNA(Ala) and Gly-tRNA(Ala) via its editing domain. This is Alanine--tRNA ligase from Herminiimonas arsenicoxydans.